Reading from the N-terminus, the 280-residue chain is 2-dehydro-3-deoxyphosphooctonate aldolase (280 aa).

This sequence belongs to the KdsA family.

It is found in the cytoplasm. It catalyses the reaction D-arabinose 5-phosphate + phosphoenolpyruvate + H2O = 3-deoxy-alpha-D-manno-2-octulosonate-8-phosphate + phosphate. Its pathway is carbohydrate biosynthesis; 3-deoxy-D-manno-octulosonate biosynthesis; 3-deoxy-D-manno-octulosonate from D-ribulose 5-phosphate: step 2/3. The protein operates within bacterial outer membrane biogenesis; lipopolysaccharide biosynthesis. The sequence is that of 2-dehydro-3-deoxyphosphooctonate aldolase from Pseudomonas putida (strain W619).